A 409-amino-acid chain; its full sequence is LL-diaminopimelate aminotransferase (409 aa).

Substrate-binding residues include Tyr-15 and Gly-42. Pyridoxal 5'-phosphate is bound by residues Tyr-72, 108-109, Tyr-132, Asn-186, Tyr-217, and 245-247; these read AK and SFS. Substrate is bound by residues Lys-109, Tyr-132, and Asn-186. Residue Lys-248 is modified to N6-(pyridoxal phosphate)lysine. Pyridoxal 5'-phosphate-binding residues include Arg-256 and Asn-291. Residues Asn-291 and Arg-385 each contribute to the substrate site.

This sequence belongs to the class-I pyridoxal-phosphate-dependent aminotransferase family. LL-diaminopimelate aminotransferase subfamily. As to quaternary structure, homodimer. Pyridoxal 5'-phosphate is required as a cofactor.

It carries out the reaction (2S,6S)-2,6-diaminopimelate + 2-oxoglutarate = (S)-2,3,4,5-tetrahydrodipicolinate + L-glutamate + H2O + H(+). It participates in amino-acid biosynthesis; L-lysine biosynthesis via DAP pathway; LL-2,6-diaminopimelate from (S)-tetrahydrodipicolinate (aminotransferase route): step 1/1. In terms of biological role, involved in the synthesis of meso-diaminopimelate (m-DAP or DL-DAP), required for both lysine and peptidoglycan biosynthesis. Catalyzes the direct conversion of tetrahydrodipicolinate to LL-diaminopimelate. The chain is LL-diaminopimelate aminotransferase from Desulfosudis oleivorans (strain DSM 6200 / JCM 39069 / Hxd3) (Desulfococcus oleovorans).